The primary structure comprises 264 residues: MERAIGVIDSGVGGLTVAKEIMRQLPKEQIIYLGDTARCPYGPRPVEEVRRFTWQMIDYLRQYPLKMLVIACNTATAVALDDVRAKLDIPVLGVIHPGARAALKATRRGHIGVIGTIGTIRSRAYEKALQSINPRVQVESLACPKFVPLVESGDFEGQEAMAIVAESLAPLRPLPIDVLILGCTHYPLLAPLIRTYMGKRVKLICSGGETAREVSAILHHSQLLYTGEREPEHLFFTTGPKELFEKISGKWFGKPIGTVEAIRL.

Residues 9–10 and 41–42 each bind substrate; these read DS and YG. C72 (proton donor/acceptor) is an active-site residue. 73-74 is a substrate binding site; the sequence is NT. C183 serves as the catalytic Proton donor/acceptor. Residue 184–185 coordinates substrate; the sequence is TH.

It belongs to the aspartate/glutamate racemases family.

It carries out the reaction L-glutamate = D-glutamate. Its pathway is cell wall biogenesis; peptidoglycan biosynthesis. Its function is as follows. Provides the (R)-glutamate required for cell wall biosynthesis. The polypeptide is Glutamate racemase (Geobacillus kaustophilus (strain HTA426)).